Reading from the N-terminus, the 368-residue chain is Phospho-N-acetylmuramoyl-pentapeptide-transferase (368 aa).

The next 10 helical transmembrane spans lie at 32–52 (TGGAVVTGALFVFLFGPWIID), 79–99 (TPTMGGLMILSGLVVSTVLWA), 102–122 (LNPYVWIVLAVTLGFGLIGFY), 142–160 (LLLELLIALAACYALTRLG), 176–196 (VALDLGWFFLGFGAFIIVGAG), 207–227 (GLAIVPVMIAAASFAMIAYLA), 244–264 (AGELAVLCGAVLGAGLGFLWF), 271–291 (IFMGDTGSLALGGMLGSIAVA), 296–316 (IVLAVIGGLFVLEAVSVIVQV), and 345–365 (QIVIRFWIISVMLALAGLSTL).

It belongs to the glycosyltransferase 4 family. MraY subfamily. Mg(2+) serves as cofactor.

The protein resides in the cell inner membrane. The enzyme catalyses UDP-N-acetyl-alpha-D-muramoyl-L-alanyl-gamma-D-glutamyl-meso-2,6-diaminopimeloyl-D-alanyl-D-alanine + di-trans,octa-cis-undecaprenyl phosphate = di-trans,octa-cis-undecaprenyl diphospho-N-acetyl-alpha-D-muramoyl-L-alanyl-D-glutamyl-meso-2,6-diaminopimeloyl-D-alanyl-D-alanine + UMP. The protein operates within cell wall biogenesis; peptidoglycan biosynthesis. In terms of biological role, catalyzes the initial step of the lipid cycle reactions in the biosynthesis of the cell wall peptidoglycan: transfers peptidoglycan precursor phospho-MurNAc-pentapeptide from UDP-MurNAc-pentapeptide onto the lipid carrier undecaprenyl phosphate, yielding undecaprenyl-pyrophosphoryl-MurNAc-pentapeptide, known as lipid I. The sequence is that of Phospho-N-acetylmuramoyl-pentapeptide-transferase from Nitrobacter winogradskyi (strain ATCC 25391 / DSM 10237 / CIP 104748 / NCIMB 11846 / Nb-255).